Reading from the N-terminus, the 255-residue chain is Hydroxyacylglutathione hydrolase (255 aa).

Zn(2+) contacts are provided by His56, His58, Asp60, His61, His114, Asp133, and His171.

This sequence belongs to the metallo-beta-lactamase superfamily. Glyoxalase II family. As to quaternary structure, monomer. Zn(2+) serves as cofactor.

It carries out the reaction an S-(2-hydroxyacyl)glutathione + H2O = a 2-hydroxy carboxylate + glutathione + H(+). Its pathway is secondary metabolite metabolism; methylglyoxal degradation; (R)-lactate from methylglyoxal: step 2/2. Its function is as follows. Thiolesterase that catalyzes the hydrolysis of S-D-lactoyl-glutathione to form glutathione and D-lactic acid. The sequence is that of Hydroxyacylglutathione hydrolase from Ruegeria pomeroyi (strain ATCC 700808 / DSM 15171 / DSS-3) (Silicibacter pomeroyi).